The sequence spans 183 residues: Inner membrane-spanning protein YciB (183 aa).

Transmembrane regions (helical) follow at residues 19-39 (LYGV…QLIV), 53-73 (IMGI…DLNF), 76-96 (WKVT…QFVF), 121-141 (LGWA…SYYF), and 151-171 (TFGF…YLYP).

It belongs to the YciB family.

Its subcellular location is the cell inner membrane. Functionally, plays a role in cell envelope biogenesis, maintenance of cell envelope integrity and membrane homeostasis. The sequence is that of Inner membrane-spanning protein YciB from Actinobacillus pleuropneumoniae serotype 7 (strain AP76).